The primary structure comprises 412 residues: Divalent metal cation transporter MntH (412 aa).

Residues 1-19 lie on the Cytoplasmic side of the membrane; that stretch reads MTNYRVESSSGRAARKMRL. The chain crosses the membrane as a helical span at residues 20–39; sequence ALMGPAFIAAIGYIDPGNFA. At 40–51 the chain is on the periplasmic side; that stretch reads TNIQAGASFGYQ. A helical membrane pass occupies residues 52 to 71; it reads LLWVVVWANLMAMLIQILSA. The Cytoplasmic portion of the chain corresponds to 72–95; it reads KLGIATGKNLAEQIRDHYPRPFVW. The helical transmembrane segment at 96 to 118 threads the bilayer; that stretch reads FYWVQAEIIAMATDLAEFIGAAI. Residues 119–125 lie on the Periplasmic side of the membrane; that stretch reads GFKLILG. Residues 126 to 145 traverse the membrane as a helical segment; sequence VSLLQGAVLTGIATFLILML. The Cytoplasmic portion of the chain corresponds to 146–155; that stretch reads QRRGQKPLEK. A helical transmembrane segment spans residues 156–175; sequence VIGGLLLFVAAAYIVELIFS. The Periplasmic segment spans residues 176–196; that stretch reads QPNLAQLGKGMVIPSLPTSEA. Residues 197–220 form a helical membrane-spanning segment; sequence VFLAAGVLGATIMPHVIYLHSSLT. At 221-238 the chain is on the cytoplasmic side; the sequence is QHLHGGSRQQRYSATKWD. A helical membrane pass occupies residues 239–258; that stretch reads VAIAMTIAGFVNLAMMATAA. Residues 259–276 lie on the Periplasmic side of the membrane; it reads AAFHFSGHTGVADLDEAY. A helical transmembrane segment spans residues 277-297; that stretch reads LTLQPLLSHAAATVFGLSLVA. Residues 298–327 lie on the Cytoplasmic side of the membrane; it reads AGLSSTVVGTLAGQVVMQGFIRFHIPLWVR. The helical transmembrane segment at 328-344 threads the bilayer; it reads RTVTMLPSFIVILMGLD. The Periplasmic segment spans residues 345–350; sequence PTRILV. The chain crosses the membrane as a helical span at residues 351–370; it reads MSQVLLSFGIALALVPLLIF. Over 371–387 the chain is Cytoplasmic; the sequence is TSDSKLMGDLVNSKRVK. The chain crosses the membrane as a helical span at residues 388 to 406; sequence QTGWVIVVLVVALNIWLLV. The Periplasmic segment spans residues 407–412; the sequence is GTALGL.

Belongs to the NRAMP family.

It localises to the cell inner membrane. Its function is as follows. H(+)-stimulated, divalent metal cation uptake system. This Escherichia coli O127:H6 (strain E2348/69 / EPEC) protein is Divalent metal cation transporter MntH.